Here is a 954-residue protein sequence, read N- to C-terminus: Patched domain-containing protein 3 (954 aa).

Basic and acidic residues predominate over residues 1–20; the sequence is MPWVEPKPRPGPEQKPKLTK. The segment at 1 to 103 is disordered; that stretch reads MPWVEPKPRP…APLPEEETPE (103 aa). Over residues 42-57 the composition is skewed to pro residues; that stretch reads QPPPGPLAPPKSPEPS. A compositionally biased stretch (acidic residues) spans 90-102; it reads ELDDAPLPEEETP. Residues 139–159 traverse the membrane as a helical segment; it reads WIFLLAPLMLTAALGTGFLYL. N-linked (GlcNAc...) asparagine glycans are attached at residues Asn192, Asn275, and Asn279. 7 helical membrane-spanning segments follow: residues 297-317, 383-403, 423-443, 447-467, 486-506, 520-540, and 603-623; these read LTGF…QLLL, VIPV…TSCF, FLAV…FVII, SPFL…SAWH, AAVS…TGIM, GMTL…FMAL, and YFVV…CFHV. Positions 383–540 constitute an SSD domain; it reads VIPVFHLAYI…ITCFGAFMAL (158 aa). Residues Asn678, Asn692, and Asn737 are each glycosylated (N-linked (GlcNAc...) asparagine). A run of 5 helical transmembrane segments spans residues 804–824, 826–846, 858–878, 894–914, and 927–947; these read VLVA…YPLC, LWVT…MAFW, LVIC…AFVS, LLGY…CVLA, and IMFL…PVFL.

Belongs to the patched family. In terms of tissue distribution, expressed in germ cells of the testis (at protein level). Detected in blood lymph, colon, small intestine, ovary, testis, prostate, thymus and spleen with highest levels in testis.

Its subcellular location is the cell projection. The protein localises to the cilium. It localises to the flagellum membrane. The protein resides in the endoplasmic reticulum membrane. Functionally, may play a role in sperm development or sperm function. However, does not appear to have an essential role in spermatogenesis or male fertility. This Homo sapiens (Human) protein is Patched domain-containing protein 3 (PTCHD3).